The sequence spans 86 residues: Large ribosomal subunit protein bL31B (86 aa).

This sequence belongs to the bacterial ribosomal protein bL31 family. Type B subfamily. Part of the 50S ribosomal subunit.

This Burkholderia cenocepacia (strain ATCC BAA-245 / DSM 16553 / LMG 16656 / NCTC 13227 / J2315 / CF5610) (Burkholderia cepacia (strain J2315)) protein is Large ribosomal subunit protein bL31B.